Here is a 196-residue protein sequence, read N- to C-terminus: Peroxynitrite isomerase (196 aa).

Residues 1–29 (MSDENPLQPPWLNAPPVDPYPYEESHDLR) are disordered. Pro residues predominate over residues 7–19 (LQPPWLNAPPVDP). The short motif at 46-52 (GVWRGRG) is the GXWXGXG element. H186 provides a ligand contact to heme b.

Belongs to the nitrobindin family. Homodimer. Requires heme b as cofactor.

It carries out the reaction peroxynitrite = nitrate. It participates in nitrogen metabolism. In terms of biological role, heme-binding protein able to scavenge peroxynitrite and to protect free L-tyrosine against peroxynitrite-mediated nitration, by acting as a peroxynitrite isomerase that converts peroxynitrite to nitrate. Therefore, this protein likely plays a role in peroxynitrite sensing and in the detoxification of reactive nitrogen and oxygen species (RNS and ROS, respectively). Is able to bind nitric oxide (NO) in vitro, but may act as a sensor of peroxynitrite levels in vivo. The sequence is that of Peroxynitrite isomerase from Salinispora arenicola (strain CNS-205).